The primary structure comprises 235 residues: Putative N-acetylmannosamine-6-phosphate 2-epimerase (235 aa).

This sequence belongs to the NanE family.

The catalysed reaction is an N-acyl-D-glucosamine 6-phosphate = an N-acyl-D-mannosamine 6-phosphate. It participates in amino-sugar metabolism; N-acetylneuraminate degradation; D-fructose 6-phosphate from N-acetylneuraminate: step 3/5. In terms of biological role, converts N-acetylmannosamine-6-phosphate (ManNAc-6-P) to N-acetylglucosamine-6-phosphate (GlcNAc-6-P). In Edwardsiella ictaluri (strain 93-146), this protein is Putative N-acetylmannosamine-6-phosphate 2-epimerase.